A 200-amino-acid chain; its full sequence is Large ribosomal subunit protein uL4 (200 aa).

The interval 43–71 is disordered; the sequence is RAQKTRAEVSGSGKKPWRQKGTGRARSGD.

This sequence belongs to the universal ribosomal protein uL4 family. As to quaternary structure, part of the 50S ribosomal subunit.

In terms of biological role, one of the primary rRNA binding proteins, this protein initially binds near the 5'-end of the 23S rRNA. It is important during the early stages of 50S assembly. It makes multiple contacts with different domains of the 23S rRNA in the assembled 50S subunit and ribosome. Functionally, forms part of the polypeptide exit tunnel. The chain is Large ribosomal subunit protein uL4 from Pasteurella multocida (strain Pm70).